A 429-amino-acid chain; its full sequence is Proton extrusion protein PxcA (429 aa).

Residues 139 to 161 form a disordered region; sequence LNGPEAPQTNGDRPDNKPKVETV. The span at 150 to 161 shows a compositional bias: basic and acidic residues; sequence DRPDNKPKVETV. 4 consecutive transmembrane segments (helical) span residues 211–231, 306–326, 353–373, and 389–409; these read FLLT…IAIT, AYEN…ILLI, LIIL…WEII, and FNFL…KYWI.

This sequence belongs to the CemA family.

It is found in the cell inner membrane. Required for H(+) efflux immediately after light irradiation to form a rapid H(+) concentration gradient across the thylakoid membranes. Together with PxcL, contributes to transient H(+) uptake following dark to light transition. This is Proton extrusion protein PxcA from Picosynechococcus sp. (strain ATCC 27264 / PCC 7002 / PR-6) (Agmenellum quadruplicatum).